Here is a 401-residue protein sequence, read N- to C-terminus: Elongation factor Tu (401 aa).

The tr-type G domain occupies 10 to 211; the sequence is KPHLNVGTIG…ALDTFVPNPK (202 aa). Residues 19-26 form a G1 region; that stretch reads GHVDHGKT. GTP is bound at residue 19 to 26; that stretch reads GHVDHGKT. Thr26 serves as a coordination point for Mg(2+). Residues 62–66 are G2; sequence GITIA. The segment at 83–86 is G3; sequence DCPG. Residues 83–87 and 138–141 each bind GTP; these read DCPGH and NKAD. The tract at residues 138–141 is G4; the sequence is NKAD. The interval 179-181 is G5; the sequence is SAV.

Belongs to the TRAFAC class translation factor GTPase superfamily. Classic translation factor GTPase family. EF-Tu/EF-1A subfamily. As to quaternary structure, monomer.

Its subcellular location is the cytoplasm. The enzyme catalyses GTP + H2O = GDP + phosphate + H(+). Functionally, GTP hydrolase that promotes the GTP-dependent binding of aminoacyl-tRNA to the A-site of ribosomes during protein biosynthesis. In Leptospira interrogans serogroup Icterohaemorrhagiae serovar copenhageni (strain Fiocruz L1-130), this protein is Elongation factor Tu.